We begin with the raw amino-acid sequence, 326 residues long: Malate dehydrogenase (326 aa).

11–17 (GAAGQIG) is an NAD(+) binding site. The substrate site is built by Arg92 and Arg98. NAD(+)-binding positions include Asn105, Gln112, and 129 to 131 (VGN). Asn131 and Arg162 together coordinate substrate. His187 functions as the Proton acceptor in the catalytic mechanism.

The protein belongs to the LDH/MDH superfamily. MDH type 2 family.

The enzyme catalyses (S)-malate + NAD(+) = oxaloacetate + NADH + H(+). Catalyzes the reversible oxidation of malate to oxaloacetate. The sequence is that of Malate dehydrogenase from Halorhodospira halophila (strain DSM 244 / SL1) (Ectothiorhodospira halophila (strain DSM 244 / SL1)).